We begin with the raw amino-acid sequence, 415 residues long: Multidrug resistance protein MdtA (415 aa).

The N-terminal stretch at 1-21 (MKGSYKSRWVIVIVVVIAAIA) is a signal peptide. Over residues 31-47 (DSQSAAPGATKQAQQSP) the composition is skewed to polar residues. Disordered regions lie at residues 31-56 (DSQSAAPGATKQAQQSPAGGRRGMRA) and 390-415 (VVETQSATTPEEKATSREYAKKGARS). Basic and acidic residues predominate over residues 399–415 (PEEKATSREYAKKGARS).

It belongs to the membrane fusion protein (MFP) (TC 8.A.1) family. In terms of assembly, part of a tripartite efflux system composed of MdtA, MdtB and MdtC.

The protein localises to the cell inner membrane. Its function is as follows. The MdtABC tripartite complex confers resistance against novobiocin and deoxycholate. This is Multidrug resistance protein MdtA from Escherichia coli O6:H1 (strain CFT073 / ATCC 700928 / UPEC).